The primary structure comprises 1056 residues: ATP-dependent helicase wrn-1 (1056 aa).

Residues 1 to 102 are disordered; the sequence is MISDDDDLPS…SSSDDSDQGD (102 aa). 2 repeat units span residues 17–26 and 28–37. Residues 17 to 37 are 2 X 10 AA repeats of N-[ED]-E-L-P-E-T-E-P-E; the sequence is NEELPETEPEDNDELPETEPE. Over residues 19-38 the composition is skewed to acidic residues; it reads ELPETEPEDNDELPETEPES. A compositionally biased stretch (polar residues) spans 43-53; the sequence is PTVTSNKTENQ. A compositionally biased stretch (acidic residues) spans 54–63; the sequence is VADEDYDSFD. The Helicase ATP-binding domain maps to 236–406; sequence VRNVLGGKDQ…IANLRLRKPL (171 aa). 249–256 lines the ATP pocket; it reads MSTGYGKS. The DEAH box signature appears at 348–351; the sequence is DEAH. One can recognise a Helicase C-terminal domain in the interval 427-583; it reads MAEDLGLFMK…NLTMMLRQLE (157 aa). Residues Cys-591, Cys-614, Cys-615, and Cys-618 each contribute to the Zn(2+) site. The disordered stretch occupies residues 749–771; sequence KEKAAPSTVPGASRSQSTKSSTE. Polar residues predominate over residues 761-771; sequence SRSQSTKSSTE. An HRDC domain is found at 806 to 886; that stretch reads PEKIDQLRSR…VQFSKETGIA (81 aa). Residues 1018–1056 are disordered; that stretch reads QEKPDIQSMPSTSNPSTIKTVPSTPSSSLRAPPLKKFKL. Over residues 1025–1046 the composition is skewed to polar residues; it reads SMPSTSNPSTIKTVPSTPSSSL.

Belongs to the helicase family. RecQ subfamily. The cofactor is Zn(2+).

It is found in the nucleus. It carries out the reaction Couples ATP hydrolysis with the unwinding of duplex DNA by translocating in the 3'-5' direction.. The catalysed reaction is ATP + H2O = ADP + phosphate + H(+). In terms of biological role, essential for the formation of DNA replication focal centers; stably associates with foci elements generating binding sites for RP-A. Exhibits a magnesium-dependent ATP-dependent 3'-5' DNA-helicase activity. May be involved in the control of genomic stability. The chain is ATP-dependent helicase wrn-1 (wrn-1) from Caenorhabditis elegans.